Consider the following 143-residue polypeptide: MSEIETIGFHYVVEAAGCDPEILGNADRIREIFLEAAKVGNMEVKSSYFFKFSPTGVSGVVIVAESHISVHTWPEKGYAALDVYTCGTKAEPEKAVDYILEKFRAKYAHVSEIKRGIEEDDDTFTHMIMTWEESLRKNGNGKG.

Ser66 (schiff-base intermediate with substrate; via pyruvic acid) is an active-site residue. Ser66 bears the Pyruvic acid (Ser); by autocatalysis mark. His71 serves as the catalytic Proton acceptor; for processing activity. Cys86 functions as the Proton donor; for catalytic activity in the catalytic mechanism.

The protein belongs to the prokaryotic AdoMetDC family. Type 1 subfamily. As to quaternary structure, heterotetramer of two alpha and two beta chains arranged as a dimer of alpha/beta heterodimers. It depends on pyruvate as a cofactor. Is synthesized initially as an inactive proenzyme. Formation of the active enzyme involves a self-maturation process in which the active site pyruvoyl group is generated from an internal serine residue via an autocatalytic post-translational modification. Two non-identical subunits are generated from the proenzyme in this reaction, and the pyruvate is formed at the N-terminus of the alpha chain, which is derived from the carboxyl end of the proenzyme. The post-translation cleavage follows an unusual pathway, termed non-hydrolytic serinolysis, in which the side chain hydroxyl group of the serine supplies its oxygen atom to form the C-terminus of the beta chain, while the remainder of the serine residue undergoes an oxidative deamination to produce ammonia and the pyruvoyl group blocking the N-terminus of the alpha chain.

The catalysed reaction is S-adenosyl-L-methionine + H(+) = S-adenosyl 3-(methylsulfanyl)propylamine + CO2. It participates in amine and polyamine biosynthesis; S-adenosylmethioninamine biosynthesis; S-adenosylmethioninamine from S-adenosyl-L-methionine: step 1/1. Functionally, catalyzes the decarboxylation of S-adenosylmethionine to S-adenosylmethioninamine (dcAdoMet), the propylamine donor required for the synthesis of the polyamines spermine and spermidine from the diamine putrescine. This Thermococcus gammatolerans (strain DSM 15229 / JCM 11827 / EJ3) protein is S-adenosylmethionine decarboxylase proenzyme.